The chain runs to 462 residues: Ribosomal oxygenase 2 (462 aa).

The interval 1 to 24 (MPKKARPAGDGKEQGPAPKQVKVE) is disordered. The JmjC domain maps to 139-271 (QPQRFKDELW…SSWGDFLLDT (133 aa)). Fe cation contacts are provided by H179, D181, and H240. Residue S308 is modified to Phosphoserine.

The protein belongs to the ROX family. MINA53 subfamily. Fe(2+) serves as cofactor.

It localises to the nucleus. The protein localises to the nucleolus. It catalyses the reaction L-histidyl-[ribosomal protein uL15] + 2-oxoglutarate + O2 = (3S)-3-hydroxy-L-histidyl-[ribosomal protein uL15] + succinate + CO2. It carries out the reaction L-histidyl-[protein] + 2-oxoglutarate + O2 = (3S)-3-hydroxy-L-histidyl-[protein] + succinate + CO2. Oxygenase that can act as both a histone lysine demethylase and a ribosomal histidine hydroxylase. Is involved in the demethylation of trimethylated 'Lys-9' on histone H3 (H3K9me3), leading to an increase in ribosomal RNA expression. Also catalyzes the hydroxylation of 60S ribosomal protein L27a on 'His-39'. May play an important role in cell growth and survival. May be involved in ribosome biogenesis, most likely during the assembly process of pre-ribosomal particles. The polypeptide is Ribosomal oxygenase 2 (RIOX2) (Bos taurus (Bovine)).